A 577-amino-acid polypeptide reads, in one-letter code: Aspartate--tRNA ligase (577 aa).

E171 is an L-aspartate binding site. Residues 195–198 (QLFK) form an aspartate region. An L-aspartate-binding site is contributed by R217. ATP-binding positions include 217–219 (RDE) and Q226. An L-aspartate-binding site is contributed by H437. E472 contacts ATP. R479 is a binding site for L-aspartate. 524–527 (GFDR) contributes to the ATP binding site.

Belongs to the class-II aminoacyl-tRNA synthetase family. Type 1 subfamily. As to quaternary structure, homodimer.

The protein resides in the cytoplasm. It carries out the reaction tRNA(Asp) + L-aspartate + ATP = L-aspartyl-tRNA(Asp) + AMP + diphosphate. Catalyzes the attachment of L-aspartate to tRNA(Asp) in a two-step reaction: L-aspartate is first activated by ATP to form Asp-AMP and then transferred to the acceptor end of tRNA(Asp). The protein is Aspartate--tRNA ligase of Deinococcus deserti (strain DSM 17065 / CIP 109153 / LMG 22923 / VCD115).